The following is a 254-amino-acid chain: Probable phosphoglycerate mutase 4 (254 aa).

Substrate is bound by residues arginine 10–asparagine 17 and serine 23–cysteine 24. Catalysis depends on histidine 11, which acts as the Tele-phosphohistidine intermediate. Phosphoserine occurs at positions 14 and 23. Position 26 is a phosphotyrosine (tyrosine 26). Serine 31 bears the Phosphoserine mark. Residues arginine 62, glutamate 89–tyrosine 92, and lysine 100 contribute to the substrate site. The active-site Proton donor/acceptor is the glutamate 89. Lysine 106 carries the N6-acetyllysine modification. Arginine 116–arginine 117 contributes to the substrate binding site. A Phosphoserine modification is found at serine 118. Glycine 187–asparagine 188 contacts substrate. An N6-acetyllysine; alternate modification is found at lysine 251. Lysine 251 bears the N6-succinyllysine; alternate mark. N6-acetyllysine is present on residues lysine 253 and lysine 254.

It belongs to the phosphoglycerate mutase family. BPG-dependent PGAM subfamily.

It catalyses the reaction (2R)-2-phosphoglycerate = (2R)-3-phosphoglycerate. It carries out the reaction (2R)-3-phospho-glyceroyl phosphate = (2R)-2,3-bisphosphoglycerate + H(+). The chain is Probable phosphoglycerate mutase 4 (PGAM4) from Pan troglodytes (Chimpanzee).